The sequence spans 388 residues: Putative pyridoxal phosphate-dependent aminotransferase EpsN (388 aa).

Lys190 carries the post-translational modification N6-(pyridoxal phosphate)lysine.

This sequence belongs to the DegT/DnrJ/EryC1 family. The cofactor is pyridoxal 5'-phosphate.

Functionally, may be involved in the production of the exopolysaccharide (EPS) component of the extracellular matrix during biofilm formation. EPS is responsible for the adhesion of chains of cells into bundles. The polypeptide is Putative pyridoxal phosphate-dependent aminotransferase EpsN (epsN) (Bacillus subtilis (strain 168)).